Reading from the N-terminus, the 882-residue chain is Alanine--tRNA ligase (882 aa).

The Zn(2+) site is built by His570, His574, Cys672, and His676.

Belongs to the class-II aminoacyl-tRNA synthetase family. It depends on Zn(2+) as a cofactor.

Its subcellular location is the cytoplasm. It carries out the reaction tRNA(Ala) + L-alanine + ATP = L-alanyl-tRNA(Ala) + AMP + diphosphate. In terms of biological role, catalyzes the attachment of alanine to tRNA(Ala) in a two-step reaction: alanine is first activated by ATP to form Ala-AMP and then transferred to the acceptor end of tRNA(Ala). Also edits incorrectly charged Ser-tRNA(Ala) and Gly-tRNA(Ala) via its editing domain. In Xanthomonas oryzae pv. oryzae (strain MAFF 311018), this protein is Alanine--tRNA ligase.